A 355-amino-acid polypeptide reads, in one-letter code: Protein-glutamate methylesterase/protein-glutamine glutaminase 3 (355 aa).

Positions 8–123 (SVLIVDDSGM…AREVEDFVDK (116 aa)) constitute a Response regulatory domain. 4-aspartylphosphate is present on aspartate 59. A disordered region spans residues 139–161 (RSAPAAGPTPVPQAPPPPAAPPA). Pro residues predominate over residues 145 to 159 (GPTPVPQAPPPPAAP). In terms of domain architecture, CheB-type methylesterase spans 160–350 (PAGDGGIIAI…ASLLEITGAS (191 aa)). Residues serine 172, histidine 199, and aspartate 292 contribute to the active site.

Belongs to the CheB family. In terms of processing, phosphorylated by CheA. Phosphorylation of the N-terminal regulatory domain activates the methylesterase activity.

The protein localises to the cytoplasm. The catalysed reaction is [protein]-L-glutamate 5-O-methyl ester + H2O = L-glutamyl-[protein] + methanol + H(+). It carries out the reaction L-glutaminyl-[protein] + H2O = L-glutamyl-[protein] + NH4(+). Functionally, involved in chemotaxis. Part of a chemotaxis signal transduction system that modulates chemotaxis in response to various stimuli. Catalyzes the demethylation of specific methylglutamate residues introduced into the chemoreceptors (methyl-accepting chemotaxis proteins or MCP) by CheR. Also mediates the irreversible deamidation of specific glutamine residues to glutamic acid. The sequence is that of Protein-glutamate methylesterase/protein-glutamine glutaminase 3 from Paramagnetospirillum magneticum (strain ATCC 700264 / AMB-1) (Magnetospirillum magneticum).